The sequence spans 158 residues: Photosystem I assembly protein Ycf3 (158 aa).

TPR repeat units lie at residues 35–68, 72–105, and 113–146; these read AFSY…EEDV, SYII…NPRL, and AVIY…APGQ.

Belongs to the Ycf3 family.

Its subcellular location is the plastid. It is found in the chloroplast thylakoid membrane. In terms of biological role, essential for the assembly of the photosystem I (PSI) complex. May act as a chaperone-like factor to guide the assembly of the PSI subunits. The polypeptide is Photosystem I assembly protein Ycf3 (Cyanidioschyzon merolae (strain NIES-3377 / 10D) (Unicellular red alga)).